We begin with the raw amino-acid sequence, 253 residues long: Protein C1orf43 homolog (253 aa).

Residues 11–31 (VNVVLVMAYGSLVFVLLFIFV) form a helical membrane-spanning segment.

The protein localises to the membrane. Its subcellular location is the golgi apparatus. The protein resides in the mitochondrion. Functionally, general regulator of phagocytosis. Required to uptake Gram negative bacterium by macrophages. The protein is Protein C1orf43 homolog of Mus musculus (Mouse).